Reading from the N-terminus, the 193-residue chain is Ribosomal RNA large subunit methyltransferase E (193 aa).

Gly51, Trp53, Asp69, Asp85, and Asp108 together coordinate S-adenosyl-L-methionine. Lys148 (proton acceptor) is an active-site residue.

The protein belongs to the class I-like SAM-binding methyltransferase superfamily. RNA methyltransferase RlmE family.

Its subcellular location is the cytoplasm. It carries out the reaction uridine(2552) in 23S rRNA + S-adenosyl-L-methionine = 2'-O-methyluridine(2552) in 23S rRNA + S-adenosyl-L-homocysteine + H(+). Specifically methylates the uridine in position 2552 of 23S rRNA at the 2'-O position of the ribose in the fully assembled 50S ribosomal subunit. This Methanoregula boonei (strain DSM 21154 / JCM 14090 / 6A8) protein is Ribosomal RNA large subunit methyltransferase E.